The primary structure comprises 109 residues: Cytochrome c-550 (109 aa).

Heme c is bound by residues cysteine 13, cysteine 16, histidine 17, and methionine 79.

Binds 1 heme c group covalently per subunit.

This Nitrobacter winogradskyi (Nitrobacter agilis) protein is Cytochrome c-550.